Reading from the N-terminus, the 396-residue chain is Elongation factor Tu (396 aa).

The 196-residue stretch at Lys10–Val205 folds into the tr-type G domain. Positions Gly19–Thr26 are G1. Residue Gly19–Thr26 coordinates GTP. A Mg(2+)-binding site is contributed by Thr26. The interval Gly62–Asn66 is G2. The tract at residues Asp83–Gly86 is G3. GTP is bound by residues Asp83 to His87 and Asn138 to Asp141. A G4 region spans residues Asn138–Asp141. Residues Ser175 to Leu177 are G5.

The protein belongs to the TRAFAC class translation factor GTPase superfamily. Classic translation factor GTPase family. EF-Tu/EF-1A subfamily. In terms of assembly, monomer.

It localises to the cytoplasm. The enzyme catalyses GTP + H2O = GDP + phosphate + H(+). In terms of biological role, GTP hydrolase that promotes the GTP-dependent binding of aminoacyl-tRNA to the A-site of ribosomes during protein biosynthesis. The protein is Elongation factor Tu of Nocardia farcinica (strain IFM 10152).